The primary structure comprises 89 residues: MANIKSKIKSIKTMEKARKRNSMIKSRVKTSIKKAKLAITQDSDNAKKLVSDAHHEIHKAKSKGVFHKNTALRKSSRLDLFFNKHMKSA.

Composition is skewed to basic residues over residues 1 to 10 (MANIKSKIKS) and 17 to 29 (ARKR…SRVK). The interval 1–29 (MANIKSKIKSIKTMEKARKRNSMIKSRVK) is disordered.

This sequence belongs to the bacterial ribosomal protein bS20 family.

In terms of biological role, binds directly to 16S ribosomal RNA. The protein is Small ribosomal subunit protein bS20 of Mycoplasmopsis pulmonis (strain UAB CTIP) (Mycoplasma pulmonis).